The primary structure comprises 392 residues: ATP phosphoribosyltransferase regulatory subunit (392 aa).

The protein belongs to the class-II aminoacyl-tRNA synthetase family. HisZ subfamily. In terms of assembly, heteromultimer composed of HisG and HisZ subunits.

Its subcellular location is the cytoplasm. The protein operates within amino-acid biosynthesis; L-histidine biosynthesis; L-histidine from 5-phospho-alpha-D-ribose 1-diphosphate: step 1/9. In terms of biological role, required for the first step of histidine biosynthesis. May allow the feedback regulation of ATP phosphoribosyltransferase activity by histidine. This is ATP phosphoribosyltransferase regulatory subunit from Listeria monocytogenes serotype 4b (strain F2365).